The sequence spans 134 residues: Small ribosomal subunit protein uS11 (134 aa).

A disordered region spans residues valine 115 to leucine 134. Residues arginine 125–leucine 134 show a composition bias toward basic residues.

Belongs to the universal ribosomal protein uS11 family.

The protein is Small ribosomal subunit protein uS11 (RPS14) of Syntrichia ruralis (Great hairy screw-moss).